Here is a 437-residue protein sequence, read N- to C-terminus: EFHDRLSYPPHSVSPTDISTSLPPMSSFHRGSTSSSPYVAASHTPPINGSDSILGARGNAAGSSQTGDALGKALASIYSPDHTSSSFPSNPSTPVGSPSPLTGTSQWPRAGGQAPSSPSYENSLHSLKNRVEQQLHEHLQDAMSFLKDVCEQSRMEDRLDRLDDAIHVLRNHAVGPSTSLPTSHSDIHSLLGPSHNAPIGNLNSNYGGSSLVTNSRSASMVGTHREDSVNLNGNHSVLSSTVAASNTDLNHKTPENYRGGLQNQSGNVVPTEIKTENKEKDENLHEPPSSDDMKSDDESSQKDIKVSSRGRTSSTNEDEDLNPEQKIEREKERRMANNARERLRVRDINEAFKELGRMCQLHLKSEKPQTKLLILHQAVAVILSLEQQVRERNLNPKAACLKRREEEKVSAASAEPPTTLPGTHPGLSETTNPMGHL.

Disordered regions lie at residues 1–68 (EFHD…QTGD), 80–123 (PDHT…YENS), and 244–335 (ASNT…ERRM). Positions 13–37 (VSPTDISTSLPPMSSFHRGSTSSSP) are enriched in polar residues. Position 44 is a phosphothreonine (threonine 44). The residue at position 64 (serine 64) is a Phosphoserine. Low complexity predominate over residues 83–94 (TSSSFPSNPSTP). Composition is skewed to polar residues over residues 95-107 (VGSPSPLTGTSQW) and 114-123 (APSSPSYENS). Basic and acidic residues-rich tracts occupy residues 273–285 (IKTENKEKDENLH) and 291–306 (DDMKSDDESSQKDIKV). Lysine 274 participates in a covalent cross-link: Glycyl lysine isopeptide (Lys-Gly) (interchain with G-Cter in SUMO2). Serine 295 bears the Phosphoserine mark. Lysine 305 is covalently cross-linked (Glycyl lysine isopeptide (Lys-Gly) (interchain with G-Cter in SUMO2)). Position 312 is a phosphothreonine (threonine 312). Phosphoserine is present on residues serine 313 and serine 314. The segment covering 323–335 (PEQKIEREKERRM) has biased composition (basic and acidic residues). The bHLH domain occupies 332–385 (ERRMANNARERLRVRDINEAFKELGRMCQLHLKSEKPQTKLLILHQAVAVILSL). Residues lysine 364 and lysine 408 each participate in a glycyl lysine isopeptide (Lys-Gly) (interchain with G-Cter in SUMO2) cross-link. The segment at 387–410 (QQVRERNLNPKAACLKRREEEKVS) is class A specific domain. A disordered region spans residues 405–437 (EEEKVSAASAEPPTTLPGTHPGLSETTNPMGHL). Low complexity predominate over residues 416 to 427 (PPTTLPGTHPGL). Polar residues predominate over residues 428 to 437 (SETTNPMGHL).

Efficient DNA binding requires dimerization with another bHLH protein. Forms homo- or heterooligomers with myogenin, E12 and ITF2 proteins. Interacts with NEUROD2. Interacts with PTF1A. Interacts with RUNX1T1. Interacts with BHLHA9.

Its subcellular location is the nucleus. In terms of biological role, transcriptional regulator. Involved in the initiation of neuronal differentiation. Activates transcription by binding to the E box (5'-CANNTG-3'). Participates in the control of inducible RP4 gene expression in salivary cells. Binds to the RIPE3 element of the insulin II promoter. May be involved in the functional network that regulates the development of the GnRH axis. This is Transcription factor 12 (TCF12) from Mesocricetus auratus (Golden hamster).